A 122-amino-acid chain; its full sequence is Large ribosomal subunit protein uL14 (122 aa).

Belongs to the universal ribosomal protein uL14 family. As to quaternary structure, part of the 50S ribosomal subunit. Forms a cluster with proteins L3 and L19. In the 70S ribosome, L14 and L19 interact and together make contacts with the 16S rRNA in bridges B5 and B8.

Functionally, binds to 23S rRNA. Forms part of two intersubunit bridges in the 70S ribosome. In Nitratidesulfovibrio vulgaris (strain ATCC 29579 / DSM 644 / CCUG 34227 / NCIMB 8303 / VKM B-1760 / Hildenborough) (Desulfovibrio vulgaris), this protein is Large ribosomal subunit protein uL14.